The sequence spans 314 residues: tRNA dimethylallyltransferase 1 (314 aa).

An ATP-binding site is contributed by 8–15; it reads GPTGSGKS. 10–15 is a substrate binding site; sequence TGSGKS.

The protein belongs to the IPP transferase family. Monomer. It depends on Mg(2+) as a cofactor.

The catalysed reaction is adenosine(37) in tRNA + dimethylallyl diphosphate = N(6)-dimethylallyladenosine(37) in tRNA + diphosphate. In terms of biological role, catalyzes the transfer of a dimethylallyl group onto the adenine at position 37 in tRNAs that read codons beginning with uridine, leading to the formation of N6-(dimethylallyl)adenosine (i(6)A). This Mycobacterium ulcerans (strain Agy99) protein is tRNA dimethylallyltransferase 1.